Here is a 113-residue protein sequence, read N- to C-terminus: Teretoxin Tan14.1 (113 aa).

A signal peptide spans 1-21; sequence MALEAQMTLRMFVLVAMASTV. Positions 22-86 are excised as a propeptide; it reads HVLSSSFSED…DETSSRTGKR (65 aa).

Belongs to the teretoxin N (TN) superfamily. Post-translationally, contains 2 disulfide bonds. In terms of tissue distribution, expressed by the venom duct.

The protein localises to the secreted. The chain is Teretoxin Tan14.1 from Terebra anilis (Auger snail).